We begin with the raw amino-acid sequence, 232 residues long: Histone H1.X (232 aa).

Positions 36–112 (HHPSYMDMIK…GATGSFRMGK (77 aa)) constitute an H15 domain. The segment at 142–232 (ISKAEKTKPS…LRTGTRKSYC (91 aa)) is disordered. Basic residues predominate over residues 159–197 (KKGKPISTMKKRGVMSKKRSSKNKMAPKAKSHGLKKKGP).

This sequence belongs to the histone H1/H5 family.

The protein localises to the nucleus. It localises to the chromosome. The sequence is that of Histone H1.X (hil-1) from Caenorhabditis elegans.